The sequence spans 364 residues: Alanine racemase (364 aa).

Residue Lys35 is the Proton acceptor; specific for D-alanine of the active site. An N6-(pyridoxal phosphate)lysine modification is found at Lys35. Arg130 contributes to the substrate binding site. Tyr256 functions as the Proton acceptor; specific for L-alanine in the catalytic mechanism. Met304 provides a ligand contact to substrate.

Belongs to the alanine racemase family. Pyridoxal 5'-phosphate serves as cofactor.

The enzyme catalyses L-alanine = D-alanine. Its pathway is amino-acid biosynthesis; D-alanine biosynthesis; D-alanine from L-alanine: step 1/1. Functionally, catalyzes the interconversion of L-alanine and D-alanine. May also act on other amino acids. The protein is Alanine racemase (alr) of Polaromonas sp. (strain JS666 / ATCC BAA-500).